Consider the following 393-residue polypeptide: Formate-dependent phosphoribosylglycinamide formyltransferase (393 aa).

Residues 20–21 and Glu-80 contribute to the N(1)-(5-phospho-beta-D-ribosyl)glycinamide site; that span reads EL. ATP contacts are provided by residues Arg-112, Lys-153, 158–163, 193–196, and Glu-201; these read SSGKGQ and EAFI. Residues 117 to 306 enclose the ATP-grasp domain; that stretch reads RLAAEDLNLP…EFELHVRAVL (190 aa). Glu-265 and Glu-277 together coordinate Mg(2+). Residues Asp-284, Lys-354, and 361-362 contribute to the N(1)-(5-phospho-beta-D-ribosyl)glycinamide site; that span reads RR.

The protein belongs to the PurK/PurT family. In terms of assembly, homodimer.

The enzyme catalyses N(1)-(5-phospho-beta-D-ribosyl)glycinamide + formate + ATP = N(2)-formyl-N(1)-(5-phospho-beta-D-ribosyl)glycinamide + ADP + phosphate + H(+). It participates in purine metabolism; IMP biosynthesis via de novo pathway; N(2)-formyl-N(1)-(5-phospho-D-ribosyl)glycinamide from N(1)-(5-phospho-D-ribosyl)glycinamide (formate route): step 1/1. In terms of biological role, involved in the de novo purine biosynthesis. Catalyzes the transfer of formate to 5-phospho-ribosyl-glycinamide (GAR), producing 5-phospho-ribosyl-N-formylglycinamide (FGAR). Formate is provided by PurU via hydrolysis of 10-formyl-tetrahydrofolate. This Syntrophotalea carbinolica (strain DSM 2380 / NBRC 103641 / GraBd1) (Pelobacter carbinolicus) protein is Formate-dependent phosphoribosylglycinamide formyltransferase.